Consider the following 140-residue polypeptide: Large ribosomal subunit protein uL3 (140 aa).

Belongs to the universal ribosomal protein uL3 family. As to quaternary structure, part of the 50S ribosomal subunit. Forms a cluster with proteins L14 and L19.

In terms of biological role, one of the primary rRNA binding proteins, it binds directly near the 3'-end of the 23S rRNA, where it nucleates assembly of the 50S subunit. The polypeptide is Large ribosomal subunit protein uL3 (rplC) (Planobispora rosea).